The sequence spans 139 residues: MSFMNPVDMVDEDAADLQFPKEFENAETLLISEVHMLLDHRKRQNESADEEQEFSEVFMKTYAYTDSFRKFKNKETIMSARSLLMQKKLHKFELAALGNLCPEAPEEAKALIPSLEGRFEDEELRQILDDIGTKRSLQY.

This sequence belongs to the eukaryotic RPB4 RNA polymerase subunit family. As to quaternary structure, RNA polymerase II consists of 12 different subunits.

The protein localises to the nucleus. The protein resides in the chromosome. DNA-dependent RNA polymerase catalyzes the transcription of DNA into RNA using the four ribonucleoside triphosphates as substrates. Associates with POLR2G. This is DNA-directed RNA polymerase II subunit Rpb4 from Drosophila melanogaster (Fruit fly).